We begin with the raw amino-acid sequence, 4621 residues long: Dynein axonemal heavy chain 5 (4621 aa).

The interval 1–1938 (MFRIGRRQLW…MIHITDVAFI (1938 aa)) is stem. Coiled-coil stretches lie at residues 260-305 (WIKQ…DQLK) and 803-825 (LENAFAKIKDLELLLDRVNDLIE). The segment at 901-921 (VCHENASPSGNTSGRREGHSE) is disordered. Coiled-coil stretches lie at residues 1065-1094 (AVKNNEDSDSDAEVEENELQETLEIASINL) and 1433-1462 (DVNIEKINNELLEFQNRCRKLPRALKDWQA). 4 AAA regions span residues 1939-2161 (YQNE…VLRT), 2221-2440 (TAIS…IQNL), 2547-2800 (VYPP…IWQG), and 2913-3167 (LYNE…FRRS). ATP is bound by residues 1977 to 1984 (GPAGTGKT) and 2259 to 2266 (GPSGSGKT). Residues 3182–3479 (YKFIYEEKHM…QTLLEDADRC (298 aa)) form a stalk region. Coiled coils occupy residues 3186–3299 (YEEK…QTIK), 3423–3490 (LKAN…STLI), and 3729–3814 (ILTE…EEYR). AAA regions lie at residues 3564–3794 (LIDA…EVTQ) and 4009–4223 (ARKY…FIQN). Residues 4389 to 4417 (FLRQEIDRMQRVLSLVRSTLTELKLAVDG) adopt a coiled-coil conformation.

Belongs to the dynein heavy chain family. Interacts with DNAL1. Consists of at least two heavy chains and a number of intermediate and light chains. As to expression, strongly expressed in lung and kidney and weaker expression seen in brain, heart and testis. In the brain, expressed in ependymal cells lining the brain ventricles and the aqueduct.

It localises to the cytoplasm. The protein resides in the cytoskeleton. Its subcellular location is the cilium axoneme. Functionally, force generating protein of respiratory cilia. Produces force towards the minus ends of microtubules. Dynein has ATPase activity; the force-producing power stroke is thought to occur on release of ADP. Required for structural and functional integrity of the cilia of ependymal cells lining the brain ventricles. The chain is Dynein axonemal heavy chain 5 from Mus musculus (Mouse).